Consider the following 106-residue polypeptide: Large ribosomal subunit protein uL24 (106 aa).

Belongs to the universal ribosomal protein uL24 family. Part of the 50S ribosomal subunit.

Its function is as follows. One of two assembly initiator proteins, it binds directly to the 5'-end of the 23S rRNA, where it nucleates assembly of the 50S subunit. One of the proteins that surrounds the polypeptide exit tunnel on the outside of the subunit. This is Large ribosomal subunit protein uL24 from Verminephrobacter eiseniae (strain EF01-2).